Consider the following 345-residue polypeptide: Heat-inducible transcription repressor HrcA (345 aa).

The protein belongs to the HrcA family.

Functionally, negative regulator of class I heat shock genes (grpE-dnaK-dnaJ and groELS operons). Prevents heat-shock induction of these operons. The chain is Heat-inducible transcription repressor HrcA from Listeria monocytogenes serotype 1/2a (strain 10403S).